The chain runs to 533 residues: Laccase-2 (533 aa).

An N-terminal signal peptide occupies residues M1–A23. Plastocyanin-like domains follow at residues I25–Y171, I173–N336, and T382–D501. Cu cation contacts are provided by H98, H100, H143, and H145. Intrachain disulfides connect C119-C516 and C151-C238. H427, H430, and H432 together coordinate Cu cation. N-linked (GlcNAc...) (high mannose) asparagine glycosylation is present at N467. Positions 483, 484, 485, and 489 each coordinate Cu cation.

Belongs to the multicopper oxidase family. The cofactor is Cu cation. In terms of processing, N-glycosylated at Asn-467; contains a high-mannose glycan with a varying number of mannose residues.

Its subcellular location is the secreted. The enzyme catalyses 4 hydroquinone + O2 = 4 benzosemiquinone + 2 H2O. Functionally, lignin degradation and detoxification of lignin-derived products. This chain is Laccase-2 (POX2), found in Pleurotus ostreatus (Oyster mushroom).